Reading from the N-terminus, the 117-residue chain is Immunoglobulin lambda variable 2 (117 aa).

The signal sequence occupies residues 1–19 (MAWTSLILSLLALCSGASS). Position 20 is a pyrrolidone carboxylic acid (Gln-20). The Ig-like domain maps to 20–117 (QAVVTQESAL…FCALWYSTHF (98 aa)).

The sequence is that of Immunoglobulin lambda variable 2 from Mus musculus (Mouse).